We begin with the raw amino-acid sequence, 452 residues long: Neuromedin-K receptor (452 aa).

Residues M1–R71 are Extracellular-facing. 4 N-linked (GlcNAc...) asparagine glycosylation sites follow: N9, N23, N40, and N60. A helical transmembrane segment spans residues I72–I94. The Cytoplasmic portion of the chain corresponds to W95–R104. A helical transmembrane segment spans residues T105–T126. The Extracellular segment spans residues L127–R146. Cysteines 145 and 220 form a disulfide. The helical transmembrane segment at F147–V168 threads the bilayer. Residues D169–K188 are Cytoplasmic-facing. Residues I189–S209 traverse the membrane as a helical segment. Residues K210–F232 are Extracellular-facing. Residues T233–V257 traverse the membrane as a helical segment. Residues G258–K286 are Cytoplasmic-facing. The chain crosses the membrane as a helical span at residues M287–L308. Over T309–I321 the chain is Extracellular. A helical transmembrane segment spans residues Q322–L346. The Cytoplasmic portion of the chain corresponds to N347–S452. Residue C361 is the site of S-palmitoyl cysteine attachment. The disordered stretch occupies residues D401–S452. The span at S433–S452 shows a compositional bias: low complexity.

It belongs to the G-protein coupled receptor 1 family. Post-translationally, the anchoring of this receptor to the plasma membrane is probably mediated by the palmitoylation of a cysteine residue.

The protein resides in the cell membrane. This is a receptor for the tachykinin neuropeptide neuromedin-K (neurokinin B). It is associated with G proteins that activate a phosphatidylinositol-calcium second messenger system. The chain is Neuromedin-K receptor (Tacr3) from Mus musculus (Mouse).